Consider the following 129-residue polypeptide: Protein yippee-like (129 aa).

The Yippee domain maps to 12 to 109 (KIYSCKHCGT…LERFKITGPD (98 aa)). Residues C16, C19, C72, and C75 each contribute to the Zn(2+) site.

The protein belongs to the yippee family.

This chain is Protein yippee-like, found in Solanum tuberosum (Potato).